Consider the following 330-residue polypeptide: Beta-hexosaminidase (330 aa).

Residues D62, R70, R133, and 163 to 164 (KH) contribute to the substrate site. Catalysis depends on H176, which acts as the Proton donor/acceptor. The active-site Nucleophile is the D246.

Belongs to the glycosyl hydrolase 3 family. NagZ subfamily.

Its subcellular location is the cytoplasm. The catalysed reaction is Hydrolysis of terminal non-reducing N-acetyl-D-hexosamine residues in N-acetyl-beta-D-hexosaminides.. It functions in the pathway cell wall biogenesis; peptidoglycan recycling. Plays a role in peptidoglycan recycling by cleaving the terminal beta-1,4-linked N-acetylglucosamine (GlcNAc) from peptide-linked peptidoglycan fragments, giving rise to free GlcNAc, anhydro-N-acetylmuramic acid and anhydro-N-acetylmuramic acid-linked peptides. In Idiomarina loihiensis (strain ATCC BAA-735 / DSM 15497 / L2-TR), this protein is Beta-hexosaminidase.